The chain runs to 254 residues: Alcohol dehydrogenase 2 (254 aa).

Position 10–33 (phenylalanine 10–leucine 33) interacts with NAD(+). Serine 138 serves as a coordination point for substrate. Tyrosine 151 (proton acceptor) is an active-site residue.

This sequence belongs to the short-chain dehydrogenases/reductases (SDR) family. In terms of assembly, homodimer.

The catalysed reaction is a primary alcohol + NAD(+) = an aldehyde + NADH + H(+). It carries out the reaction a secondary alcohol + NAD(+) = a ketone + NADH + H(+). This Drosophila hydei (Fruit fly) protein is Alcohol dehydrogenase 2 (Adh2).